The primary structure comprises 853 residues: Cytochrome P450 monooxygenase mpaDE' (853 aa).

Residues 1–6 (MESLSL) lie on the Lumenal side of the membrane. The helical transmembrane segment at 7-29 (TWITAIAVVLYLVQRYVRSYWRL) threads the bilayer. The Cytoplasmic portion of the chain corresponds to 30–853 (KDIPGPVLAK…DIENAIEGQK (824 aa)). C449 lines the heme pocket.

Belongs to the cytochrome P450 family. Heme serves as cofactor.

The protein resides in the endoplasmic reticulum membrane. The catalysed reaction is 5-methylorsellinate + reduced [NADPH--hemoprotein reductase] + O2 = 4,6-dihydroxy-2-(hydroxymethyl)-3-methylbenzoate + oxidized [NADPH--hemoprotein reductase] + H2O + H(+). It catalyses the reaction 4,6-dihydroxy-2-(hydroxymethyl)-3-methylbenzoate + H(+) = 5,7-dihydroxy-4-methylphthalide + H2O. It participates in secondary metabolite biosynthesis; terpenoid biosynthesis. Its function is as follows. Cytochrome P450 monooxygenase; part of the gene cluster that mediates the biosynthesis of mycophenolic acid (MPA), the first isolated antibiotic natural product in the world obtained from a culture of Penicillium brevicompactum in 1893. MpaDE' is an endoplasmic reticulum-bound enzyme that catalyzes the conversion of 5-methylorsellinic acid (5MOA) into the phthalide compound 5,7-dihydroxy-4,6-dimethylphthalide (DHMP). MpaDE' first catalyzes hydroxylation of 5-MOA to 4,6-dihydroxy-2-(hydroxymethyl)-3-methylbenzoic acid (DHMB), and then acts as a lactone synthase that catalyzes the ring closure to convert DHMB into DHMP. The first step of the pathway is the synthesis of 5-methylorsellinic acid (5MOA) by the cytosolic polyketide synthase mpaC. 5MOA is then converted to the phthalide compound 5,7-dihydroxy-4,6-dimethylphthalide (DHMP) by the endoplasmic reticulum-bound cytochrome P450 monooxygenase mpaDE. MpaDE first catalyzes hydroxylation of 5-MOA to 4,6-dihydroxy-2-(hydroxymethyl)-3-methylbenzoic acid (DHMB). MpaDE then acts as a lactone synthase that catalyzes the ring closure to convert DHMB into DHMP. The next step is the prenylation of DHMP by the Golgi apparatus-associated prenyltransferase mpaA to yield farnesyl-DHMP (FDHMP). The ER-bound oxygenase mpaB then mediates the oxidative cleavage the C19-C20 double bond in FDHMP to yield FDHMP-3C via a mycophenolic aldehyde intermediate. The O-methyltransferase mpaG catalyzes the methylation of FDHMP-3C to yield MFDHMP-3C. After the cytosolic methylation of FDHMP-3C, MFDHMP-3C enters into peroxisomes probably via free diffusion due to its low molecular weight. Upon a peroxisomal CoA ligation reaction, catalyzed by a beta-oxidation component enzyme acyl-CoA ligase ACL891, MFDHMP-3C-CoA would then be restricted to peroxisomes for the following beta-oxidation pathway steps. The peroxisomal beta-oxidation machinery than converts MFDHMP-3C-CoA into MPA_CoA, via a beta-oxidation chain-shortening process. Finally mpaH acts as a peroxisomal acyl-CoA hydrolase with high substrate specificity toward MPA-CoA to release the final product MPA. The protein is Cytochrome P450 monooxygenase mpaDE' of Penicillium brevicompactum.